A 357-amino-acid polypeptide reads, in one-letter code: 4-hydroxymandelate oxidase (357 aa).

The FMN hydroxy acid dehydrogenase domain occupies 1 to 357 (MTYVSLADLE…RRLNTKLGVV (357 aa)). Gln-126 provides a ligand contact to FMN. Tyr-128 serves as a coordination point for a 2-oxocarboxylate. Thr-154 contacts FMN. Arg-163 is a binding site for a 2-oxocarboxylate. FMN is bound at residue Lys-228. The active-site Proton acceptor is His-252. A 2-oxocarboxylate is bound at residue Arg-255. FMN contacts are provided by residues 283–287 (DGGIR) and 306–307 (GR).

This sequence belongs to the FMN-dependent alpha-hydroxy acid dehydrogenase family. FMN serves as cofactor.

The catalysed reaction is (S)-4-hydroxymandelate + O2 = 4-hydroxyphenylglyoxylate + H2O2. It functions in the pathway antibiotic biosynthesis; vancomycin biosynthesis. Catalyzes the oxidation of p-hydroxymandelate to p-hydroxybenzoylformate in the biosynthesis of L-(4-hydroxyphenyl)glycine and L-(3,5-dihydroxyphenyl)glycine, 2 non-proteinogenic amino acids occurring in the vancomycin group of antibiotics. In Amycolatopsis orientalis (Nocardia orientalis), this protein is 4-hydroxymandelate oxidase (hmo).